The primary structure comprises 738 residues: MSTYRKTYKNQSKRFNNGNNSNSTSTELTNLVEMFPDWEADELQGLLSENDNSLEIVIDLIVNNKVSKWEPIKKEKHKKKEHKDDTTDSVTGNANGASNSGSSNSTTASGDRRLNNKAKASTSSRPPKRQQHPNAAHKKNEKTERSKASTVSTTTTSATSSVTKESVPPSNSWAAALSNDKPKKQETKSEASESIPSSNDGGDAETVPEVEQAETLEESHQEPENVEEPIESVSEQSQPENTKPVLKSAAIPEPKQGSWASAIAPKTKPKPKTVSKPVPQPEESKPEEHIPVQEEAQPVESILEDKPAVEAVQPVQPPVEDEPVEAPAASSVAAVADASFSEPTASSIIDQQPQVVLPTTQQQVDSVGISFGSLSVDAGEPKEAAEVIQDETISEQVQPEQQQQSQQQPLQEQQRYGLYNQQPTQQRYQQNNYQQQGQYSKQQQQQQQQQTSQPTQQQQQYDYYGQYQQQQYPQQTAQPGAQFGGYPGFDYNAYNQQAFAAAAAASPAASHVATIGGGVGGYNQYAQQANSADSTQSPIVNQSTLQQQQAAVLAAQQQQQQLPTPFGYPAYYNYYYNNPYFNAGGLGSTGFSAPQQGTQQGTQQQQSQQSGQQQQQVSSANQQGSVSSNSFGAQQQYYNPNQFNSRYPGYSYPPQQQNQQSSQHTSGQSQQGAQTTSDGASDGQQTSQQGQSSQQPQQQQQQHAQPVPQQHMMPQYGAYQQYPQYGYQDSNQYRGGWY.

Residues 1–12 are compositionally biased toward basic residues; sequence MSTYRKTYKNQS. 4 disordered regions span residues 1–25, 73–306, 372–460, and 587–711; these read MSTY…NSTS, KKEK…LEDK, GSLS…QQQQ, and GSTG…PQQH. Composition is skewed to low complexity over residues 16 to 25 and 91 to 109; these read NNGNNSNSTS and TGNA…TTAS. A CUE domain is found at 23–66; that stretch reads STSTELTNLVEMFPDWEADELQGLLSENDNSLEIVIDLIVNNKV. Residues 126–140 show a composition bias toward basic residues; sequence PPKRQQHPNAAHKKN. A compositionally biased stretch (low complexity) spans 148 to 164; the sequence is ASTVSTTTTSATSSVTK. Residues 180-191 show a composition bias toward basic and acidic residues; the sequence is DKPKKQETKSEA. The segment covering 202 to 216 has biased composition (acidic residues); that stretch reads GDAETVPEVEQAETL. Basic and acidic residues predominate over residues 282–292; the sequence is EESKPEEHIPV. Low complexity-rich tracts occupy residues 394–460 and 595–630; these read SEQV…QQQQ and QQGT…SSNS. Over residues 631-645 the composition is skewed to polar residues; sequence FGAQQQYYNPNQFNS. 2 stretches are compositionally biased toward low complexity: residues 647 to 677 and 684 to 711; these read YPGY…QTTS and QQTS…PQQH.

The protein belongs to the DEF1 family. In terms of assembly, homodimer; may form higher order oligomers. Interacts with the large RNA polymerase II subunit RPO21; the interaction is direct and serves to bridge RPO21 to the Elongin complex in a manner dependent on transcription stress. Interacts with RAD26. In terms of processing, ubiquitinated. Post-translationally, proteolytically cleaved by the proteasome in response to transcription stress; the resulting N-terminal form constitutes the activated nuclear form and the C-terminal portion is degraded.

It localises to the cytoplasm. Its subcellular location is the nucleus. The protein localises to the chromosome. It is found in the telomere. Its function is as follows. Recruits the ubiquitination machinery to RNA polymerase II for polyubiquitination, removal and degradation, when the transcription-coupled repair (TCR) factor RAD26 fails to efficiently displace stalled RNA polymerase II. Also involved in telomere length regulation. Binds DNA. The sequence is that of RNA polymerase II degradation factor 1 (DEF1) from Candida albicans (strain SC5314 / ATCC MYA-2876) (Yeast).